We begin with the raw amino-acid sequence, 79 residues long: D-alanyl carrier protein (79 aa).

The 76-residue stretch at 1 to 76 (MKEQIFDIIE…KIAARVQEKT (76 aa)) folds into the Carrier domain. An O-(pantetheine 4'-phosphoryl)serine modification is found at S34.

Belongs to the DltC family. 4'-phosphopantetheine is transferred from CoA to a specific serine of apo-DCP.

The protein resides in the cytoplasm. The protein operates within cell wall biogenesis; lipoteichoic acid biosynthesis. Carrier protein involved in the D-alanylation of lipoteichoic acid (LTA). The loading of thioester-linked D-alanine onto DltC is catalyzed by D-alanine--D-alanyl carrier protein ligase DltA. The DltC-carried D-alanyl group is further transferred to cell membrane phosphatidylglycerol (PG) by forming an ester bond, probably catalyzed by DltD. D-alanylation of LTA plays an important role in modulating the properties of the cell wall in Gram-positive bacteria, influencing the net charge of the cell wall. In Lactococcus lactis subsp. cremoris (strain SK11), this protein is D-alanyl carrier protein.